The following is a 399-amino-acid chain: G2/mitotic-specific cyclin-B2 (399 aa).

The tract at residues Pro-58 to Pro-78 is disordered.

The protein belongs to the cyclin family. Cyclin AB subfamily. Interacts with the CDK1 protein kinase to form a serine/threonine kinase holoenzyme complex also known as maturation promoting factor (MPF). The cyclin subunit imparts substrate specificity to the complex.

Its function is as follows. Essential for the control of the cell cycle at the G2/M (mitosis) transition. The chain is G2/mitotic-specific cyclin-B2 (CCNB2) from Gallus gallus (Chicken).